The chain runs to 484 residues: Mitogen-activated protein kinase SLT2/MPK1 (484 aa).

The 296-residue stretch at phenylalanine 23 to leucine 318 folds into the Protein kinase domain. Residues isoleucine 29–valine 37 and lysine 54 each bind ATP. Catalysis depends on aspartate 153, which acts as the Proton acceptor. Threonine 190 carries the post-translational modification Phosphothreonine. The short motif at threonine 190–tyrosine 192 is the TXY element. A Phosphotyrosine modification is found at tyrosine 192. A compositionally biased stretch (low complexity) spans glutamine 383–proline 392. Disordered stretches follow at residues glutamine 383–serine 403 and isoleucine 426–aspartate 464.

The protein belongs to the protein kinase superfamily. CMGC Ser/Thr protein kinase family. MAP kinase subfamily. As to quaternary structure, interacts with RLM1. Requires Mg(2+) as cofactor. Post-translationally, dually phosphorylated on Thr-190 and Tyr-192, which activates the enzyme.

The enzyme catalyses L-seryl-[protein] + ATP = O-phospho-L-seryl-[protein] + ADP + H(+). It carries out the reaction L-threonyl-[protein] + ATP = O-phospho-L-threonyl-[protein] + ADP + H(+). Its activity is regulated as follows. Activated by tyrosine and threonine phosphorylation by MKK1 and MKK2. Serine/threonine protein kinase involved in a signal transduction pathway that plays a role in yeast cell morphogenesis and cell growth. This pathway seems to start by SMP3; then involve the kinase PKC1 that may act the BCK1 kinase that then phosphorylates MKK1 and MKK2 which themselves phosphorylate the SLT2/MPK1 kinase which itself then phosphorylates and activates the transcription factor RLM1. Directly phosphorylates BCY1 upon TOR complex 1 (TORC1) inhibition. The protein is Mitogen-activated protein kinase SLT2/MPK1 (SLT2) of Saccharomyces cerevisiae (strain ATCC 204508 / S288c) (Baker's yeast).